A 124-amino-acid polypeptide reads, in one-letter code: Fluoride-specific ion channel FluC (124 aa).

A run of 4 helical transmembrane segments spans residues 4-24 (LLLV…ISIF), 35-55 (FGTL…YALG), 60-80 (ISPE…TTFS), and 102-122 (VVLN…LVFS). Na(+)-binding residues include Gly74 and Thr77.

Belongs to the fluoride channel Fluc/FEX (TC 1.A.43) family.

The protein localises to the cell inner membrane. It carries out the reaction fluoride(in) = fluoride(out). Na(+) is not transported, but it plays an essential structural role and its presence is essential for fluoride channel function. Fluoride-specific ion channel. Important for reducing fluoride concentration in the cell, thus reducing its toxicity. In Shewanella baltica (strain OS185), this protein is Fluoride-specific ion channel FluC.